We begin with the raw amino-acid sequence, 219 residues long: Urease subunit gamma/beta (219 aa).

Positions 1–101 (MFLTPREQEK…LVTVRNPIKS (101 aa)) are urease gamma. Residues 102-219 (SKKTLNTYII…IKRAKERGFA (118 aa)) form a urease beta region.

In the N-terminal section; belongs to the urease gamma subunit family. This sequence in the C-terminal section; belongs to the urease beta subunit family. In terms of assembly, heterohexamer of 3 UreC (alpha) and 3 UreAB (gamma/beta) subunits.

It is found in the cytoplasm. The catalysed reaction is urea + 2 H2O + H(+) = hydrogencarbonate + 2 NH4(+). It functions in the pathway nitrogen metabolism; urea degradation; CO(2) and NH(3) from urea (urease route): step 1/1. This chain is Urease subunit gamma/beta, found in Sulfurisphaera tokodaii (strain DSM 16993 / JCM 10545 / NBRC 100140 / 7) (Sulfolobus tokodaii).